A 360-amino-acid polypeptide reads, in one-letter code: Nucleoporin SEH1 (360 aa).

WD repeat units lie at residues 10–49 (DHKD…DWHC), 55–96 (THSG…SNDK), 111–152 (DSRT…NLSQ), 160–210 (SCKL…RKYA), 217–258 (TVTD…KELT), and 276–315 (NHNS…NWKC). Lysine 12 is covalently cross-linked (Glycyl lysine isopeptide (Lys-Gly) (interchain with G-Cter in SUMO2)). A phosphoserine mark is found at serine 179 and serine 190. The span at 324–354 (SPVNGSSQQGTSNPSLGSTIPSLQNSLNGSS) shows a compositional bias: polar residues. Residues 324 to 360 (SPVNGSSQQGTSNPSLGSTIPSLQNSLNGSSAGRKHS) form a disordered region.

Belongs to the WD repeat SEC13 family. Component of the Nup107-160 subcomplex of the nuclear pore complex (NPC). The Nup107-160 subcomplex includes NUP160, NUP133, NUP107, NUP98, NUP85, NUP43, NUP37, SEH1 and SEC13. The SEH1 subunit appears to be only weakly associated with the Nup107-160 subcomplex. Component of the GATOR2 subcomplex, composed of MIOS, SEC13, SEH1L, WDR24 and WDR59. The GATOR2 complex interacts with CASTOR1 and CASTOR2; the interaction is negatively regulated by arginine. The GATOR2 complex interacts with SESN1, SESN2 and SESN3; the interaction is negatively regulated by amino acids. SESN1, SESN2 and SESN3 convey leucine availability via direct interaction with SEH1L and WDR24.

The protein localises to the chromosome. Its subcellular location is the centromere. It is found in the kinetochore. It localises to the nucleus. The protein resides in the nuclear pore complex. The protein localises to the lysosome membrane. The GATOR2 complex is negatively regulated by the upstream amino acid sensors CASTOR1 and SESN2, which sequester the GATOR2 complex in absence of amino acids. In the presence of abundant amino acids, GATOR2 is released from CASTOR1 and SESN2 and activated. Functionally, component of the Nup107-160 subcomplex of the nuclear pore complex (NPC). The Nup107-160 subcomplex is required for the assembly of a functional NPC. The Nup107-160 subcomplex is also required for normal kinetochore microtubule attachment, mitotic progression and chromosome segregation. This subunit plays a role in recruitment of the Nup107-160 subcomplex to the kinetochore. In terms of biological role, as a component of the GATOR2 complex, functions as an activator of the amino acid-sensing branch of the mTORC1 signaling pathway. The GATOR2 complex indirectly activates mTORC1 through the inhibition of the GATOR1 subcomplex. GATOR2 probably acts as an E3 ubiquitin-protein ligase toward GATOR1. In the presence of abundant amino acids, the GATOR2 complex mediates ubiquitination of the NPRL2 core component of the GATOR1 complex, leading to GATOR1 inactivation. In the absence of amino acids, GATOR2 is inhibited, activating the GATOR1 complex. Within the GATOR2 complex, SEC13 and SEH1L are required to stabilize the complex. The protein is Nucleoporin SEH1 (SEH1L) of Homo sapiens (Human).